The chain runs to 112 residues: Cytochrome c (112 aa).

Heme c is bound by residues Cys23, Cys26, His27, and Met89.

It belongs to the cytochrome c family. In terms of processing, binds 1 heme c group covalently per subunit.

It localises to the mitochondrion intermembrane space. In terms of biological role, electron carrier protein. The oxidized form of the cytochrome c heme group can accept an electron from the heme group of the cytochrome c1 subunit of cytochrome reductase. Cytochrome c then transfers this electron to the cytochrome oxidase complex, the final protein carrier in the mitochondrial electron-transport chain. The protein is Cytochrome c (CYC1) of Chlamydomonas reinhardtii (Chlamydomonas smithii).